We begin with the raw amino-acid sequence, 236 residues long: UPF0257 lipoprotein YnfC (236 aa).

A signal peptide spans 1–16 (MKYKLLPCLLAIFLTG). Cysteine 17 carries N-palmitoyl cysteine lipidation. The S-diacylglycerol cysteine moiety is linked to residue cysteine 17.

This sequence belongs to the UPF0257 family.

The protein resides in the cell membrane. The polypeptide is UPF0257 lipoprotein YnfC (Escherichia coli O17:K52:H18 (strain UMN026 / ExPEC)).